We begin with the raw amino-acid sequence, 118 residues long: Large ribosomal subunit protein uL22c (118 aa).

The protein belongs to the universal ribosomal protein uL22 family. As to quaternary structure, part of the 50S ribosomal subunit.

Its subcellular location is the plastid. The protein resides in the chloroplast. Its function is as follows. This protein binds specifically to 23S rRNA. The globular domain of the protein is located near the polypeptide exit tunnel on the outside of the subunit, while an extended beta-hairpin is found that lines the wall of the exit tunnel in the center of the 70S ribosome. In Physcomitrium patens (Spreading-leaved earth moss), this protein is Large ribosomal subunit protein uL22c (rpl22).